A 171-amino-acid polypeptide reads, in one-letter code: S-ribosylhomocysteine lyase (171 aa).

H54, H58, and C128 together coordinate Fe cation.

This sequence belongs to the LuxS family. As to quaternary structure, homodimer. It depends on Fe cation as a cofactor.

The catalysed reaction is S-(5-deoxy-D-ribos-5-yl)-L-homocysteine = (S)-4,5-dihydroxypentane-2,3-dione + L-homocysteine. Its function is as follows. Involved in the synthesis of autoinducer 2 (AI-2) which is secreted by bacteria and is used to communicate both the cell density and the metabolic potential of the environment. The regulation of gene expression in response to changes in cell density is called quorum sensing. Catalyzes the transformation of S-ribosylhomocysteine (RHC) to homocysteine (HC) and 4,5-dihydroxy-2,3-pentadione (DPD). This is S-ribosylhomocysteine lyase from Pectobacterium atrosepticum (strain SCRI 1043 / ATCC BAA-672) (Erwinia carotovora subsp. atroseptica).